The chain runs to 899 residues: Bifunctional uridylyltransferase/uridylyl-removing enzyme (899 aa).

The tract at residues 1–342 (MPQMDPELFD…RAGESGPATP (342 aa)) is uridylyltransferase. Positions 343-705 (LNSRFQVRDG…TTQREFEGGT (363 aa)) are uridylyl-removing. Positions 461–583 (VDAHTLNLIK…VGDQTHLDYL (123 aa)) constitute an HD domain. 2 ACT domains span residues 706-784 (QIFI…DEYP) and 816-897 (ILEL…SLQI).

The protein belongs to the GlnD family. Requires Mg(2+) as cofactor.

It catalyses the reaction [protein-PII]-L-tyrosine + UTP = [protein-PII]-uridylyl-L-tyrosine + diphosphate. It carries out the reaction [protein-PII]-uridylyl-L-tyrosine + H2O = [protein-PII]-L-tyrosine + UMP + H(+). Its activity is regulated as follows. Uridylyltransferase (UTase) activity is inhibited by glutamine, while glutamine activates uridylyl-removing (UR) activity. Its function is as follows. Modifies, by uridylylation and deuridylylation, the PII regulatory proteins (GlnB and homologs), in response to the nitrogen status of the cell that GlnD senses through the glutamine level. Under low glutamine levels, catalyzes the conversion of the PII proteins and UTP to PII-UMP and PPi, while under higher glutamine levels, GlnD hydrolyzes PII-UMP to PII and UMP (deuridylylation). Thus, controls uridylylation state and activity of the PII proteins, and plays an important role in the regulation of nitrogen assimilation and metabolism. This chain is Bifunctional uridylyltransferase/uridylyl-removing enzyme, found in Ectopseudomonas mendocina (strain ymp) (Pseudomonas mendocina).